The chain runs to 317 residues: Beta-ketoacyl-[acyl-carrier-protein] synthase III (317 aa).

Catalysis depends on residues cysteine 112 and histidine 244. An ACP-binding region spans residues 245 to 249 (QANLR). Asparagine 274 is an active-site residue.

Belongs to the thiolase-like superfamily. FabH family. In terms of assembly, homodimer.

It is found in the cytoplasm. The catalysed reaction is malonyl-[ACP] + acetyl-CoA + H(+) = 3-oxobutanoyl-[ACP] + CO2 + CoA. Its pathway is lipid metabolism; fatty acid biosynthesis. Functionally, catalyzes the condensation reaction of fatty acid synthesis by the addition to an acyl acceptor of two carbons from malonyl-ACP. Catalyzes the first condensation reaction which initiates fatty acid synthesis and may therefore play a role in governing the total rate of fatty acid production. Possesses both acetoacetyl-ACP synthase and acetyl transacylase activities. Its substrate specificity determines the biosynthesis of branched-chain and/or straight-chain of fatty acids. The polypeptide is Beta-ketoacyl-[acyl-carrier-protein] synthase III (Enterobacter sp. (strain 638)).